The chain runs to 25 residues: ATP synthase subunit alpha, mitochondrial (25 aa).

This sequence belongs to the ATPase alpha/beta chains family. In terms of assembly, F-type ATPases have 2 components, CF(1) - the catalytic core - and CF(0) - the membrane proton channel. CF(1) has five subunits: alpha(3), beta(3), gamma(1), delta(1), epsilon(1). CF(0) has three main subunits: a, b and c.

The protein localises to the mitochondrion. It is found in the mitochondrion inner membrane. In terms of biological role, mitochondrial membrane ATP synthase (F(1)F(0) ATP synthase or Complex V) produces ATP from ADP in the presence of a proton gradient across the membrane which is generated by electron transport complexes of the respiratory chain. F-type ATPases consist of two structural domains, F(1) - containing the extramembraneous catalytic core, and F(0) - containing the membrane proton channel, linked together by a central stalk and a peripheral stalk. During catalysis, ATP synthesis in the catalytic domain of F(1) is coupled via a rotary mechanism of the central stalk subunits to proton translocation. Subunits alpha and beta form the catalytic core in F(1). Rotation of the central stalk against the surrounding alpha(3)beta(3) subunits leads to hydrolysis of ATP in three separate catalytic sites on the beta subunits. Subunit alpha does not bear the catalytic high-affinity ATP-binding sites. In Spinacia oleracea (Spinach), this protein is ATP synthase subunit alpha, mitochondrial (ATPA).